A 62-amino-acid polypeptide reads, in one-letter code: Pro-MCH variant (62 aa).

The interval 23–41 (GSVAFPAENGVQDTESTQE) is NGE-like. Residues 28-62 (PAENGVQDTESTQEKRETGDEENSAQFPIGRRDFD) are disordered. Residues 44 to 56 (ETGDEENSAQFPI) are NEI-like. Residues 60–62 (DFD) are melanin-concentrating hormone-like.

This sequence belongs to the melanin-concentrating hormone family.

This is Pro-MCH variant (PMCHL1) from Hylobates lar (Lar gibbon).